We begin with the raw amino-acid sequence, 992 residues long: UPF0182 protein RHA1_ro06389 (992 aa).

The next 7 helical transmembrane spans lie at 18 to 38, 63 to 83, 114 to 134, 174 to 194, 211 to 231, 260 to 280, and 288 to 308; these read VLLVLALVVAALLLVGPRLIS, LLLFLVVGVVVGGIVWLALLL, LFGLAIPIAVGLLAGLIAQSS, WLFVAVLLAFFASLVTHYIFG, VQLAVLAGTFILLKAVAYWFD, KLILLAIAVICAGAFFAAIFL, and MATALLVLSSILVGAVWPLVV. The tract at residues 904 to 948 is disordered; that stretch reads TGSVATAPSAEEGTPPETGTTPPVDQGAAPAPTAPATPPSGTDVS. The span at 908–934 shows a compositional bias: low complexity; sequence ATAPSAEEGTPPETGTTPPVDQGAAPA.

Belongs to the UPF0182 family.

It localises to the cell membrane. The polypeptide is UPF0182 protein RHA1_ro06389 (Rhodococcus jostii (strain RHA1)).